A 435-amino-acid chain; its full sequence is MEPRVGNKYRLGRKIGSGSFGEIYLGTHIQTNEEVAIKLENVKTKHPQLLYESKLYRILQGGTGVPNIKWFGVEGDYNTLVMDLLGPSLEDLFNFCSRKLSLKSVLMLADQMINRVEYFHSKSFLHRDLKPDNFLMGLGRRANQVHIIDFGLAKKYRDNTTHQHIPYRENKNLTGTARYASMNTHLGIEQSRRDDLESLGYILMYFLKGSLPWQGLKAGTKKQKYERISEKKVSTSIESLCRGYPSEFASYFHYCRSLRFDDKPDYGYLKRIFRDLFIREGFQFDYVFDWTILKYQQSQLTAPPSRGLVSPAVGTSAGLPPGLTSIDRYGGEEEGGRPPMDSSRRRMSGALENSGNLSSRGPMMPSSSLFAQSAGSSRRVTSEELQRCRTGAGLRNSPVVTTPEGKRSSSTRKHYDSAIKGIETLQVSDERFHHH.

The Protein kinase domain maps to 9–278; sequence YRLGRKIGSG…LKRIFRDLFI (270 aa). ATP-binding positions include 15–23 and Lys-38; that span reads IGSGSFGEI. Residue Asp-128 is the Proton acceptor of the active site. Disordered regions lie at residues 313–363 and 394–414; these read VGTS…RGPM and LRNS…TRKH.

Belongs to the protein kinase superfamily. CK1 Ser/Thr protein kinase family. Casein kinase I subfamily. Monomer. Autophosphorylated.

It is found in the cytoplasm. The catalysed reaction is L-seryl-[protein] + ATP = O-phospho-L-seryl-[protein] + ADP + H(+). It carries out the reaction L-threonyl-[protein] + ATP = O-phospho-L-threonyl-[protein] + ADP + H(+). Its function is as follows. Casein kinases are operationally defined by their preferential utilization of acidic proteins such as caseins as substrates. It can phosphorylate a large number of proteins. This Arabidopsis thaliana (Mouse-ear cress) protein is Casein kinase 1-like protein 12.